Reading from the N-terminus, the 815-residue chain is MQFSESWLRTFANPEKISTDALSHSLTMAGLEVEEVGPVAPPFDKIVVAHVLSTERHPNADRLNVCQVDAGTGETLQIVCGAPNVKPGIKVPCALVGAVLPPAEAEGKPFEIKVGKLRGVESYGMLCSARELKLSEDHGGLLVLPEDAPVGQNIREYLDLDDQVFIIKLTPNKADCLSIHGVAREVSALTGATLTLPDMKPVAVTIDDKLPVKVSAPDLCGRFSGRVIRGVNARAATPAWMVQRLERSGQRSISAMVDISNYVMLELGRPSHVFDLDKIHGGLDVRWGRKGEQIKLLNGNTIEVDEQVGVIADDKEIESLAGIMGGDSTAVTLDTTNIYLEAAFWWPSAIQGRARRYNFSTDAAHRFERGVDYATTVEHIERITALILEICGGQAGPVDDHIVNLPQRRPVSLRLARAERVLGIELSSAVVADVFQRLQLPFTRSQGADGEVFEVTPPSYRFDIEIEEDLIEEVARIYGFERIAARPPVAESEMRPTNEGRRSTHVVRHALAARDYQEVINFAFVEEKWERDFAANDNPIRLLNPIASQLAVMRSSLIGGLLDKVRYNLNRKAARVRLFEVGRVFHRDADVKDGGLTVAGYHQPMMAAGIAYGPAFEEQWGITTRNVDFFDVKGDVETLFYPRVARFEPVEHPALHPGRAARMLIDGKPVGVVGEMHPRWLQEYELTQAPVLFELELDALREAGLPTYAEISKFPAAVRDLAVVVKQSVRVQDMLDSMRAALDKQGCGRFCQSLVLFDEFRPKAASAAIGADEKSLAFRVTLQDTGSTLQDETVDSAVRCMVDALGEAFQARLRG.

A tRNA-binding domain is found at 40–155 (APPFDKIVVA…EDAPVGQNIR (116 aa)). In terms of domain architecture, B5 spans 406–485 (PQRRPVSLRL…RIYGFERIAA (80 aa)). Mg(2+) is bound by residues aspartate 463, aspartate 469, glutamate 472, and glutamate 473. An FDX-ACB domain is found at 712-814 (SKFPAAVRDL…LGEAFQARLR (103 aa)).

The protein belongs to the phenylalanyl-tRNA synthetase beta subunit family. Type 1 subfamily. Tetramer of two alpha and two beta subunits. Requires Mg(2+) as cofactor.

The protein localises to the cytoplasm. It catalyses the reaction tRNA(Phe) + L-phenylalanine + ATP = L-phenylalanyl-tRNA(Phe) + AMP + diphosphate + H(+). This is Phenylalanine--tRNA ligase beta subunit from Cupriavidus pinatubonensis (strain JMP 134 / LMG 1197) (Cupriavidus necator (strain JMP 134)).